A 554-amino-acid polypeptide reads, in one-letter code: Putative acyl-coenzyme A synthetase (554 aa).

195-206 (LLYSSGTTGPPK) is an AMP binding site.

The protein belongs to the ATP-dependent AMP-binding enzyme family.

The sequence is that of Putative acyl-coenzyme A synthetase from Emericella nidulans (strain FGSC A4 / ATCC 38163 / CBS 112.46 / NRRL 194 / M139) (Aspergillus nidulans).